Consider the following 1323-residue polypeptide: ABC transporter gloK (1323 aa).

The next 7 helical transmembrane spans lie at 6–26 (AIASIFTAIVCFKFIILTLEA), 102–122 (PHALLKVMLATFKGLLLAGIL), 138–158 (VAYGLIAAYAIVYIGIAVMST), 217–237 (IWASLIEIALSLWLLEVRLGV), 240–260 (VAAVFVIIGNICTLLGCVFGF), 325–345 (LLVGIVTLSYVSTTMAPVFAF), and 359–379 (PLLAASAYTSLTIFSLLGQAV). An ABC transmembrane type-1 1 domain is found at 142-380 (LIAAYAIVYI…IFSLLGQAVS (239 aa)). Residues 471-697 (IRDCSACWSK…SSYLESLGTR (227 aa)) enclose the ABC transporter 1 domain. Position 503 to 510 (503 to 510 (GPIGSGKS)) interacts with ATP. The next 7 helical transmembrane spans lie at 748-768 (GWVTWWVFVLLCSGFVFGLVF), 795-815 (YALWPLMAIVIFLGACAWLMI), 821-841 (AAIQFHGILLNSALSAPLVYF), 859-879 (LIDMELPTALIGTTVTFLSCI), 891-910 (YVAAAIPALIVFLYYIQLFY), 976-996 (LNLTLELAVAFLAIILVSIAL), and 1006-1026 (IGVALLSIVGFGLNLKTLVYT). Positions 752–1031 (WWVFVLLCSG…TLVYTWTSLE (280 aa)) constitute an ABC transmembrane type-1 2 domain. The region spanning 1069 to 1300 (IRFQSVSAAY…PSFFASLLKA (232 aa)) is the ABC transporter 2 domain. An ATP-binding site is contributed by 1103-1110 (GRTGSGKS).

Belongs to the ABC transporter superfamily. ABCC family. Conjugate transporter (TC 3.A.1.208) subfamily.

The protein localises to the cell membrane. Its function is as follows. 3-isopropylmalate dehydratase large subunit; part of the gene cluster that mediates the biosynthesis of pneumocandins, lipohexapeptides of the echinocandin family that prevent fungal cell wall formation by non-competitive inhibition of beta-1,3-glucan synthase. Possibly secretes antifungal pneumocandins, thus avoiding of intracellular accumulation and ameliorating the toxicity to the producing cells. This is ABC transporter gloK from Glarea lozoyensis (strain ATCC 20868 / MF5171).